Here is a 98-residue protein sequence, read N- to C-terminus: Serine rich endogenous peptide 10 (98 aa).

The signal sequence occupies residues methionine 1 to serine 29. Residues asparagine 50–proline 98 form a disordered region. Polar residues predominate over residues alanine 52 to aspartate 61. 2 short sequence motifs (SCOOP motif) span residues alanine 52–serine 66 and aspartate 80–arginine 94. 2 consecutive short sequence motifs (sxS motif essential for MIK2 binding) follow at residues serine 58–serine 60 and serine 86–serine 88. A compositionally biased stretch (gly residues) spans serine 86–proline 98.

The protein belongs to the serine rich endogenous peptide (SCOOP) phytocytokine family. Interacts with MIK2 (via extracellular leucine-rich repeat domain); this interaction triggers the formation of complex between MIK2 and the BAK1/SERK3 and SERK4 coreceptors, and subsequent BAK1 activation by phosphorylation. In terms of tissue distribution, mostly expressed in leaves and seedlings shoots, to a lower extent, in roots, but barely in flowers.

The protein resides in the cell membrane. It localises to the secreted. Its subcellular location is the extracellular space. It is found in the apoplast. Its function is as follows. Brassicaceae-specific phytocytokine (plant endogenous peptide released into the apoplast) perceived by MIK2 in a BAK1/SERK3 and SERK4 coreceptors-dependent manner, that modulates various physiological and antimicrobial processes including growth prevention and reactive oxygen species (ROS) response regulation. Inhibits root growth and regulates root meristems. Promotes ROS production and MAPK (e.g. MPK3, MPK4 and MPK6) activation in a MIK2-dependent manner, thus leading to the up-regulation of immune-related marker genes (e.g. WRKY30, WRKY33 and CYP81F2). The sequence is that of Serine rich endogenous peptide 10 from Arabidopsis thaliana (Mouse-ear cress).